The sequence spans 246 residues: 1-(5-phosphoribosyl)-5-[(5-phosphoribosylamino)methylideneamino] imidazole-4-carboxamide isomerase (246 aa).

Asp8 acts as the Proton acceptor in catalysis. Asp130 serves as the catalytic Proton donor.

It belongs to the HisA/HisF family.

It is found in the cytoplasm. The catalysed reaction is 1-(5-phospho-beta-D-ribosyl)-5-[(5-phospho-beta-D-ribosylamino)methylideneamino]imidazole-4-carboxamide = 5-[(5-phospho-1-deoxy-D-ribulos-1-ylimino)methylamino]-1-(5-phospho-beta-D-ribosyl)imidazole-4-carboxamide. Its pathway is amino-acid biosynthesis; L-histidine biosynthesis; L-histidine from 5-phospho-alpha-D-ribose 1-diphosphate: step 4/9. The polypeptide is 1-(5-phosphoribosyl)-5-[(5-phosphoribosylamino)methylideneamino] imidazole-4-carboxamide isomerase (Hydrogenovibrio crunogenus (strain DSM 25203 / XCL-2) (Thiomicrospira crunogena)).